We begin with the raw amino-acid sequence, 596 residues long: Probable protein phosphatase 2C 26 (596 aa).

The tract at residues 122–154 is disordered; sequence SGPLDPAVPFSGPLPAKPPKPASSSSRGFSRRF. Residues 177-584 enclose the PPM-type phosphatase domain; that stretch reads LRRDDGVQWA…DDVTVMVISL (408 aa). 4 residues coordinate Mn(2+): D212, G213, D512, and D575.

Belongs to the PP2C family. Requires Mg(2+) as cofactor. It depends on Mn(2+) as a cofactor.

It catalyses the reaction O-phospho-L-seryl-[protein] + H2O = L-seryl-[protein] + phosphate. The enzyme catalyses O-phospho-L-threonyl-[protein] + H2O = L-threonyl-[protein] + phosphate. The protein is Probable protein phosphatase 2C 26 of Oryza sativa subsp. japonica (Rice).